The primary structure comprises 373 residues: Chemerin-like receptor 1 (373 aa).

Residues 1 to 41 (MRMEDEDYNTSISYGDEYPDYLDSIVVLEDLSPLEARVTRI) lie on the Extracellular side of the membrane. Asn-9 carries an N-linked (GlcNAc...) asparagine glycan. Residues 42 to 64 (FLVVVYSIVCFLGILGNGLVIII) traverse the membrane as a helical segment. Residues 65–75 (ATFKMKKTVNM) lie on the Cytoplasmic side of the membrane. Residues 76–97 (VWFLNLAVADFLFNVFLPIHIT) traverse the membrane as a helical segment. The Extracellular portion of the chain corresponds to 98–114 (YAAMDYHWVFGTAMCKI). Cysteines 112 and 189 form a disulfide. The helical transmembrane segment at 115 to 135 (SNFLLIHNMFTSVFLLTIISS) threads the bilayer. Residues 136–154 (DRCISVLLPVWSQNHRSVR) are Cytoplasmic-facing. A helical membrane pass occupies residues 155–176 (LAYMACMVIWVLAFFLSSPSLV). At 177–224 (FRDTANLHGKISCFNNFSLSTPGSSSWPTHSQMDPVGYSRHMVVTVTR) the chain is on the extracellular side. Asn-192 carries an N-linked (GlcNAc...) asparagine glycan. The chain crosses the membrane as a helical span at residues 225 to 245 (FLCGFLVPVLIITACYLTIVC). At 246–261 (KLQRNRLAKTKKPFKI) the chain is on the cytoplasmic side. Residues 262-282 (IVTIIITFFLCWCPYHTLNLL) form a helical membrane-spanning segment. The Extracellular segment spans residues 283-300 (ELHHTAMPGSVFSLGLPL). A helical transmembrane segment spans residues 301-320 (ATALAIANSCMNPILYVFMG). Residues 321 to 373 (QDFKKFKVALFSRLVNALSEDTGHSSYPSHRSFTKMSSMNERTSMNERETGML) are Cytoplasmic-facing. Ser-339 is modified (phosphoserine). The segment at 341–373 (DTGHSSYPSHRSFTKMSSMNERTSMNERETGML) is disordered. Thr-342 carries the post-translational modification Phosphothreonine. Residues 344-363 (HSSYPSHRSFTKMSSMNERT) are compositionally biased toward polar residues. Residues Ser-349, Ser-352, and Ser-358 each carry the phosphoserine modification. Residues 364-373 (SMNERETGML) show a composition bias toward basic and acidic residues.

The protein belongs to the chemokine-like receptor (CMKLR) family. Prominently expressed in developing osseous and cartilaginous tissue. Also found in adult parathyroid glands. Expressed in cardiovascular system, brain, kidney, gastrointestinal tissues and myeloid tissues. Expressed in a broad array of tissues associated with hematopoietic and immune function including, spleen, thymus, appendix, lymph node, bone marrow and fetal liver. Among leukocyte populations abundant expression in monocyte-derived macrophage and immature dendritic cells (DCs). High expression in blood monocytes and low levels in polymorphonuclear cells and T-cells. Expressed on endothelial cells. Highly expressed in differentiating adipocytes.

It is found in the cell membrane. Receptor for the chemoattractant adipokine chemerin/RARRES2 and for the omega-3 fatty acid derived molecule resolvin E1. Interaction with RARRES2 initiates activation of G proteins G(i)/G(o) and beta-arrestin pathways inducing cellular responses via second messenger pathways such as intracellular calcium mobilization, phosphorylation of MAP kinases MAPK1/MAPK3 (ERK1/2), TYRO3, MAPK14/P38MAPK and PI3K leading to multifunctional effects, like reduction of immune responses, enhancing of adipogenesis and angionesis. Resolvin E1 down-regulates cytokine production in macrophages by reducing the activation of MAPK1/3 (ERK1/2) and NF-kappa-B. Positively regulates adipogenesis and adipocyte metabolism. Its function is as follows. (Microbial infection) Acts as a coreceptor for several SIV strains (SIVMAC316, SIVMAC239, SIVMACL7E-FR and SIVSM62A), as well as a primary HIV-1 strain (92UG024-2). The sequence is that of Chemerin-like receptor 1 from Homo sapiens (Human).